The following is a 636-amino-acid chain: Leucine-rich repeat and fibronectin type-III domain-containing protein 4 (636 aa).

The first 16 residues, 1 to 16 (MAPPLLLLLLASGAAA), serve as a signal peptide directing secretion. Residues 17–48 (CPLPCVCQNLSESLSTLCAHRGLLFVPPNVDR) form the LRRNT domain. The Extracellular portion of the chain corresponds to 17-518 (CPLPCVCQNL…LQAHVLGGTL (502 aa)). N-linked (GlcNAc...) asparagine glycosylation is found at N25 and N70. LRR repeat units follow at residues 49-70 (RTVELRLADNFIQALGPPDFRN), 73-94 (GLVDLTLSRNAITRIGARSFGD), 97-118 (SLRSLHLDGNRLVELGSSSLRG), 121-142 (NLQHLILSGNQLGRIAPGAFDD), 146-169 (SLEDLDVSYNNLRQVPWAGIGSMP), 170-191 (ALHTLNLDHNLIDALPPGVFAQ), and 194-215 (QLSRLDLTSNRLATLAPDPLFS). Residues 234-280 (NPLHCNCELLWLRRLARPDDLETCASPPTLAGRYFWAVPEGEFSCEP) enclose the LRRCT domain. One can recognise an Ig-like domain in the interval 281–367 (PLIARHTQRL…GEATARVELR (87 aa)). The cysteines at positions 302 and 351 are disulfide-linked. N-linked (GlcNAc...) asparagine glycosylation is found at N324, N333, N376, and N440. One can recognise a Fibronectin type-III domain in the interval 405–502 (SEPAVQVTEV…GCAHFSTLPA (98 aa)). A helical transmembrane segment spans residues 519 to 539 (TVAVGGVLVAALLVFTVALLV). Over 540–636 (RGRGAGNGRL…SAERLEESVV (97 aa)) the chain is Cytoplasmic. Residues 556 to 585 (VQSQTNGGTSPMPKSHPPRSPPPRPQRSCS) are disordered. Residues 569-580 (KSHPPRSPPPRP) are compositionally biased toward pro residues. Phosphoserine occurs at positions 585 and 627. Residues 633–636 (ESVV) carry the PDZ-binding motif.

It belongs to the LRFN family. In terms of assembly, can form heteromeric complexes with LRFN1, LRFN2, LRFN3 and LRFN5. Unable to form homophilic interactions across cell junctions. Interacts with DLG1, DLG2 and DLG3. Also interacts with DLG4. In terms of processing, glycosylated. In terms of tissue distribution, expressed in brain and testis. In the brain, weak, but broad expression in the cerebral cortex and diencephalic nuclei. Also detected in other parts of the central nervous system, including the olfactory bulb, pons, cerebellum, and medulla oblongata, as well as in the peripheral nervous system, such as the ganglia of cranial nerves and the dorsal root ganglion during gestation.

The protein localises to the membrane. Its function is as follows. Promotes neurite outgrowth in hippocampal neurons. May play a role in redistributing DLG4 to the cell periphery. The sequence is that of Leucine-rich repeat and fibronectin type-III domain-containing protein 4 (Lrfn4) from Mus musculus (Mouse).